Here is a 71-residue protein sequence, read N- to C-terminus: UPF0346 protein SUB0487 (71 aa).

It belongs to the UPF0346 family.

The chain is UPF0346 protein SUB0487 from Streptococcus uberis (strain ATCC BAA-854 / 0140J).